The sequence spans 1487 residues: Secretory phospholipase A2 receptor (1487 aa).

The signal sequence occupies residues 1–26 (MVQWLAMLQLLWLQQLLLLGIHQGIA). Residues 27-1396 (QDLTHIQEPS…AQPEKGLSHS (1370 aa)) are Extracellular-facing. The Ricin B-type lectin domain occupies 42–165 (KGIFIIQSES…SSGGDICEHP (124 aa)). Cystine bridges form between cysteine 55/cysteine 68, cysteine 93/cysteine 110, cysteine 181/cysteine 207, and cysteine 195/cysteine 222. Asparagine 97 carries N-linked (GlcNAc...) asparagine glycosylation. The 49-residue stretch at 176–224 (AHGMPCVFPFQFKGHWHHDCIREGQKEHLLWCATTSRYEEDEKWGFCPD) folds into the Fibronectin type-II domain. Residue asparagine 239 is glycosylated (N-linked (GlcNAc...) asparagine). C-type lectin domains lie at 241–357 (SSRI…YICK), 387–504 (FNRK…YICK), 524–643 (HGRF…MSLC), 673–797 (GLAS…WICR), 819–938 (YQNA…SICK), and 964–1095 (FNYK…GFVC). Intrachain disulfides connect cysteine 263-cysteine 356, cysteine 333-cysteine 348, cysteine 408-cysteine 503, cysteine 480-cysteine 495, cysteine 617-cysteine 634, cysteine 699-cysteine 796, cysteine 774-cysteine 788, cysteine 840-cysteine 937, cysteine 914-cysteine 929, and cysteine 1066-cysteine 1086. Asparagine 928 carries N-linked (GlcNAc...) asparagine glycosylation. N-linked (GlcNAc...) asparagine glycans are attached at residues asparagine 1107, asparagine 1122, and asparagine 1131. 2 C-type lectin domains span residues 1120–1231 (YGNR…GAIC) and 1256–1377 (FKGN…FICK). 3 cysteine pairs are disulfide-bonded: cysteine 1208–cysteine 1222, cysteine 1279–cysteine 1376, and cysteine 1353–cysteine 1368. A helical transmembrane segment spans residues 1397 to 1417 (IVPVTVTLTLIIALGIFMLCF). Residues 1418-1487 (WIYKQKSDIF…HKGRPICISP (70 aa)) lie on the Cytoplasmic side of the membrane. Residues 1435-1441 (GSYYPTL) carry the Endocytosis signal motif. Positions 1463-1475 (DEEVRDAPATESK) are enriched in basic and acidic residues. Positions 1463-1487 (DEEVRDAPATESKRGHKGRPICISP) are disordered.

In terms of assembly, interacts with sPLA2-IB/PLA2G1B; this interaction mediates intracellular signaling as well as clearance of extracellular sPLA2-IB/PLA2G1B via endocytotic pathway. Interacts with sPLA2-X/PLA2G10; this interaction mediates sPLA2-X/PLA2G10 clearance and inactivation. In terms of processing, the secretory phospholipase A2 receptor form may be produced by the action of metalloproteinases. It contains all extracellular domains and only lacks transmembrane and cytosolic regions. It is however unclear whether this form is produced by proteolytic cleavage as suggested by some experiments reported by PubMed:11830583, or by alternative splicing. In terms of tissue distribution, widely expressed. Present in type II alveolar epithelial cells and a subset of splenic lymphocytes. Present at the surface of polymorphonuclear neutrophils (at protein level).

It is found in the cell membrane. The protein resides in the secreted. Its function is as follows. Receptor for secretory phospholipase A2 (sPLA2). Acts as a receptor for phospholipases sPLA2-IB/PLA2G1B, sPLA2-X/PLA2G10 and, with lower affinity, sPLA2-IIA/PLA2G2A. Also able to bind to snake PA2-like toxins. Although its precise function remains unclear, binding of sPLA2 to its receptor participates in both positive and negative regulation of sPLA2 functions as well as clearance of sPLA2. Binding of sPLA2-IB/PLA2G1B induces various effects depending on the cell type, such as activation of the mitogen-activated protein kinase (MAPK) cascade to induce cell proliferation, the production of lipid mediators, selective release of arachidonic acid in bone marrow-derived mast cells. In neutrophils, binding of sPLA2-IB/PLA2G1B can activate p38 MAPK to stimulate elastase release and cell adhesion. May be involved in responses in pro-inflammatory cytokine productions during endotoxic shock. Also has endocytic properties and rapidly internalizes sPLA2 ligands, which is particularly important for the clearance of extracellular sPLA2s to protect their potent enzymatic activities. The soluble secretory phospholipase A2 receptor form is circulating and acts as a negative regulator of sPLA2 functions by blocking the biological functions of sPLA2-IB/PLA2G1B and sPLA2-X/PLA2G10. In podocytes, binding of sPLA2-IB/PLA2G1B can regulate podocyte survival and glomerular homeostasis. In Mus musculus (Mouse), this protein is Secretory phospholipase A2 receptor (Pla2r1).